The chain runs to 209 residues: Ribose 1,5-bisphosphate phosphokinase PhnN (209 aa).

Residue 27 to 34 (GPSGGGKD) coordinates ATP.

Belongs to the ribose 1,5-bisphosphokinase family.

It catalyses the reaction alpha-D-ribose 1,5-bisphosphate + ATP = 5-phospho-alpha-D-ribose 1-diphosphate + ADP. Its pathway is metabolic intermediate biosynthesis; 5-phospho-alpha-D-ribose 1-diphosphate biosynthesis; 5-phospho-alpha-D-ribose 1-diphosphate from D-ribose 5-phosphate (route II): step 3/3. Catalyzes the phosphorylation of ribose 1,5-bisphosphate to 5-phospho-D-ribosyl alpha-1-diphosphate (PRPP). The polypeptide is Ribose 1,5-bisphosphate phosphokinase PhnN (Chelativorans sp. (strain BNC1)).